The sequence spans 257 residues: MSRRADGRADDELREVRITRGFTTHPAGSVLVEFGQTRVMCTASVTEGVPAWRRDSGLGWLTAEYAMLPAATHTRSGRESVKGRVGGRTQEISRLVGRSLRACIDLAAIGENTIAIDCDVLQADGGTRTAAITGAYVALADAVTWLGAAGALADPQPISCAIAAVSVGVVDGRVRLDLPYEEDSRAEVDMNVVATDTGTLVEIQGTGEGATFPRSTLDKLLDAALAGCEQLFAVQKEALALPYPGVLPEPAEPAKRK.

Residues Arg88 and 126–128 contribute to the phosphate site; that span reads GTR.

It belongs to the RNase PH family. As to quaternary structure, homohexameric ring arranged as a trimer of dimers.

It catalyses the reaction tRNA(n+1) + phosphate = tRNA(n) + a ribonucleoside 5'-diphosphate. In terms of biological role, phosphorolytic 3'-5' exoribonuclease that plays an important role in tRNA 3'-end maturation. Removes nucleotide residues following the 3'-CCA terminus of tRNAs; can also add nucleotides to the ends of RNA molecules by using nucleoside diphosphates as substrates, but this may not be physiologically important. Probably plays a role in initiation of 16S rRNA degradation (leading to ribosome degradation) during starvation. The polypeptide is Ribonuclease PH (Nocardia farcinica (strain IFM 10152)).